The sequence spans 360 residues: Peptide chain release factor 1 (360 aa).

Q235 bears the N5-methylglutamine mark. A disordered region spans residues K284–E304.

This sequence belongs to the prokaryotic/mitochondrial release factor family. Methylated by PrmC. Methylation increases the termination efficiency of RF1.

The protein localises to the cytoplasm. Peptide chain release factor 1 directs the termination of translation in response to the peptide chain termination codons UAG and UAA. The polypeptide is Peptide chain release factor 1 (Agrobacterium fabrum (strain C58 / ATCC 33970) (Agrobacterium tumefaciens (strain C58))).